Reading from the N-terminus, the 178-residue chain is MATEYAIIAGGCFWCTEAVFKQIHGVVSVESGYIGGHTENPTYKQVCGGDTGHAEAIRIGFDPEKVSFGDLLDISFATHDPTQLNRQGNDIGTQYRSAIFPVSEEQLEEAKMAIARAQSEHNDAIVTTIEAHSTWYPAEDYHQDYWAGEGQGNRYCLAVIPPKLQKLHKRFAAYTAPE.

Residue Cys-12 is part of the active site.

This sequence belongs to the MsrA Met sulfoxide reductase family.

The enzyme catalyses L-methionyl-[protein] + [thioredoxin]-disulfide + H2O = L-methionyl-(S)-S-oxide-[protein] + [thioredoxin]-dithiol. It catalyses the reaction [thioredoxin]-disulfide + L-methionine + H2O = L-methionine (S)-S-oxide + [thioredoxin]-dithiol. Functionally, has an important function as a repair enzyme for proteins that have been inactivated by oxidation. Catalyzes the reversible oxidation-reduction of methionine sulfoxide in proteins to methionine. The polypeptide is Peptide methionine sulfoxide reductase MsrA (Erwinia tasmaniensis (strain DSM 17950 / CFBP 7177 / CIP 109463 / NCPPB 4357 / Et1/99)).